The primary structure comprises 573 residues: DNA ligase (573 aa).

Residue Glu-250 participates in ATP binding. Lys-252 acts as the N6-AMP-lysine intermediate in catalysis. Positions 257, 272, 301, 342, 432, and 438 each coordinate ATP.

This sequence belongs to the ATP-dependent DNA ligase family. The cofactor is Mg(2+).

The enzyme catalyses ATP + (deoxyribonucleotide)n-3'-hydroxyl + 5'-phospho-(deoxyribonucleotide)m = (deoxyribonucleotide)n+m + AMP + diphosphate.. DNA ligase that seals nicks in double-stranded DNA during DNA replication, DNA recombination and DNA repair. The sequence is that of DNA ligase from Methanococcus maripaludis (strain C6 / ATCC BAA-1332).